A 460-amino-acid polypeptide reads, in one-letter code: MMARLKVPEGWCVQAFRFTLNPTQTQAASLARHFGARRKAFNWTVTALKADIKAWRADGTESAKPSLRVLRKRWNTVKDQVCVNAQTGQVWWPECSKEAYADGIAGAVDAYWNWQSCRAGKRAGKTVGVPRFKKKGRDADRVCFTTGAMRVEPDRRHLTLPVIGTIRTYENTRRVERLIAKGRARVLAITVRRNGTRLDASVRVLVQRPQQRRVALPDSRVGVDVGVRRLATVADAEGTVLEQVPNPRPLDAALRGLRRVSRARSRCTKGSRRYCERTTELSRLHRRVNDVRTHHLHVLTTRLAKTHGRIVVEGLDAAGMLRQKGLPGARARRRALSDAALATPRRHLSYKTGWYGSSLVVADRWFPSSKTCHACRHVQDIGWDEKWQCDGCSITHQRDDNAAINLARYEEPPSVVGPVGAAVKRGADRKTGPGPAGGREARKATGHPAGEQPRDGVQVK.

Active-site residues include Asp224 and Glu313. Zn(2+)-binding residues include Cys372, Cys375, Cys389, and Cys392. Residue Asp399 is part of the active site. The tract at residues Val415–Lys460 is disordered.

It in the N-terminal section; belongs to the transposase 2 family. This sequence in the C-terminal section; belongs to the transposase 35 family.

An RNA-guided dsDNA endonuclease. When guided by an RNA derived from the right-end element of its insertion sequence element (IS), cleaves DNA downstream of the transposon-associated motif (TAM). Cleaves supercoiled and linear DNA in a staggered manner 15-21 bases from the TAM yielding 5'-overhangs. Binds reRNA, an approximately 150 nucleotide base sRNA derived from the 3' end of its own gene, the right end (RE) of the insertion sequence (IS) plus sequence downstream of the IS. The protein is Putative RNA-guided DNA endonuclease MT2953 of Mycobacterium tuberculosis (strain CDC 1551 / Oshkosh).